The chain runs to 1356 residues: Spike glycoprotein (1356 aa).

Residues 1 to 18 (MKLFLILLVLPLASCFFT) form the signal peptide. 2 S1 regions span residues 16–717 (FFTC…FYYV) and 19–717 (CNSN…FYYV). The Virion surface portion of the chain corresponds to 19-1296 (CNSNANLSML…NRFENYIKWP (1278 aa)). 3 N-linked (GlcNAc) asparagine; by host glycosylation sites follow: Asn-35, Asn-52, and Asn-98. Cys-106 and Cys-126 form a disulfide bridge. An N-linked (GlcNAc) asparagine; by host glycan is attached at Asn-155. An intrachain disulfide couples Cys-175 to Cys-181. N-linked (GlcNAc) asparagine; by host glycosylation is found at Asn-187 and Asn-193. Cys-207 and Cys-210 are joined by a disulfide. N-linked (GlcNAc) asparagine; by host glycosylation is found at Asn-240, Asn-276, Asn-301, Asn-330, Asn-354, Asn-358, Asn-403, and Asn-426. Cysteines 259 and 284 form a disulfide. Cys-328 and Cys-351 are oxidised to a cystine. The cysteines at positions 438 and 447 are disulfide-linked. A glycan (N-linked (GlcNAc...) asparagine; by host) is linked at Asn-486. Cysteines 497 and 500 form a disulfide. An N-linked (GlcNAc) asparagine; by host glycan is attached at Asn-506. An N-linked (GlcNAc...) asparagine; by host glycan is attached at Asn-512. 2 disulfides stabilise this stretch: Cys-516–Cys-567 and Cys-550–Cys-577. Positions 598 to 728 (VTWSEGNSIT…NGGNNCTTAV (131 aa)) are interaction with host ANPEP. Asn-626, Asn-645, Asn-666, Asn-699, and Asn-723 each carry an N-linked (GlcNAc) asparagine; by host glycan. An intrachain disulfide couples Cys-627 to Cys-678. Positions 718 to 1356 (SNGGNNCTTA…YYEFEKVHVQ (639 aa)) are S2. A disulfide bridge connects residues Cys-724 and Cys-737. Asn-749, Asn-762, and Asn-768 each carry an N-linked (GlcNAc) asparagine; by host glycan. 3 cysteine pairs are disulfide-bonded: Cys-789–Cys-811, Cys-794–Cys-800, and Cys-896–Cys-907. Residues 934–954 (IGGMVLGGLTSAAAIPFSLAL) form a fusion peptide region. A heptad repeat 1 (HR1) region spans residues 948-1067 (IPFSLALQAR…QVDRLITGRL (120 aa)). Positions 1015–1059 (QDVVNQQGSALNHLTSQLRHNFQAISNSIQAIYDRLDSIQADQQV) form a coiled coil. Residues Cys-1098 and Cys-1109 are joined by a disulfide bond. 7 N-linked (GlcNAc) asparagine; by host glycosylation sites follow: Asn-1111, Asn-1196, Asn-1201, Asn-1218, Asn-1242, Asn-1247, and Asn-1277. A heptad repeat 2 (HR2) region spans residues 1212–1308 (PDYVDVNKTL…VWLIISVVFV (97 aa)). Positions 1244-1286 (TYLNLSSELKQLEAKTASLFQTTVELQGLIDQINSTYVDLKLL) form a coiled coil. A helical transmembrane segment spans residues 1297-1316 (WWVWLIISVVFVVLLSLLVF). At 1317 to 1356 (CCLSTGCCGCCNCLTSSMRGCCDCGSTKLPYYEFEKVHVQ) the chain is on the intravirion side. The KxHxx motif lies at 1352–1356 (KVHVQ).

Belongs to the alphacoronaviruses spike protein family. In terms of assembly, homotrimer. During virus morphogenesis, found in a complex with M proteins. Interacts with host ACE2. Post-translationally, glycosylated by host with heterogeneous N-linked glycans protruding from the trimer surface. Highly glycosylated by host, occluding many regions across the surface of the protein.

Its subcellular location is the virion membrane. It is found in the host endoplasmic reticulum-Golgi intermediate compartment membrane. Functionally, S1 region attaches the virion to the cell membrane by interacting with host ACE2, initiating the infection. Binding to the receptor probably induces conformational changes in the S glycoprotein unmasking the fusion peptide and activating membranes fusion. S2 region belongs to the class I viral fusion protein. Under the current model, the protein has at least 3 conformational states: pre-fusion native state, pre-hairpin intermediate state, and post-fusion hairpin state. During viral and target cell membrane fusion, the coiled coil regions (heptad repeats) regions assume a trimer-of-hairpins structure, positioning the fusion peptide in close proximity to the C-terminal region of the ectodomain. The formation of this structure appears to drive apposition and subsequent fusion of viral and target cell membranes. The chain is Spike glycoprotein from Human coronavirus NL63 (HCoV-NL63).